We begin with the raw amino-acid sequence, 916 residues long: Protein translocase subunit SecA (916 aa).

Residues Q87, 105-109 (GEGKT), and D512 contribute to the ATP site. A disordered region spans residues 857–916 (QHAEAPSMEQAVAGEEEELPEGPAPVVPLEPVRNEQKIGRNEPCPCGSGKKYKHCHGQLD). C900, C902, C911, and H912 together coordinate Zn(2+). The span at 906 to 916 (KKYKHCHGQLD) shows a compositional bias: basic residues.

It belongs to the SecA family. As to quaternary structure, monomer and homodimer. Part of the essential Sec protein translocation apparatus which comprises SecA, SecYEG and auxiliary proteins SecDF-YajC and YidC. Zn(2+) serves as cofactor.

Its subcellular location is the cell inner membrane. It localises to the cytoplasm. It carries out the reaction ATP + H2O + cellular proteinSide 1 = ADP + phosphate + cellular proteinSide 2.. Part of the Sec protein translocase complex. Interacts with the SecYEG preprotein conducting channel. Has a central role in coupling the hydrolysis of ATP to the transfer of proteins into and across the cell membrane, serving both as a receptor for the preprotein-SecB complex and as an ATP-driven molecular motor driving the stepwise translocation of polypeptide chains across the membrane. The sequence is that of Protein translocase subunit SecA from Pseudomonas aeruginosa (strain UCBPP-PA14).